The chain runs to 248 residues: Triosephosphate isomerase (248 aa).

A substrate-binding site is contributed by 11 to 13 (NWK). The Electrophile role is filled by His-95. Glu-167 functions as the Proton acceptor in the catalytic mechanism. Substrate is bound by residues Gly-173, Ser-212, and 233–234 (GG).

The protein belongs to the triosephosphate isomerase family. Homodimer.

Its subcellular location is the cytoplasm. The enzyme catalyses D-glyceraldehyde 3-phosphate = dihydroxyacetone phosphate. It functions in the pathway carbohydrate biosynthesis; gluconeogenesis. The protein operates within carbohydrate degradation; glycolysis; D-glyceraldehyde 3-phosphate from glycerone phosphate: step 1/1. Functionally, involved in the gluconeogenesis. Catalyzes stereospecifically the conversion of dihydroxyacetone phosphate (DHAP) to D-glyceraldehyde-3-phosphate (G3P). The polypeptide is Triosephosphate isomerase (Ralstonia nicotianae (strain ATCC BAA-1114 / GMI1000) (Ralstonia solanacearum)).